Consider the following 568-residue polypeptide: Phosphomethylpyrimidine synthase (568 aa).

Substrate is bound by residues Asn188, Met217, Tyr246, His282, 302-304, 343-346, and Glu382; these read SRG and DGLR. His386 contacts Zn(2+). Tyr409 is a substrate binding site. Zn(2+) is bound at residue His450. Cys530, Cys533, and Cys538 together coordinate [4Fe-4S] cluster.

The protein belongs to the ThiC family. As to quaternary structure, homodimer. Requires [4Fe-4S] cluster as cofactor.

The catalysed reaction is 5-amino-1-(5-phospho-beta-D-ribosyl)imidazole + S-adenosyl-L-methionine = 4-amino-2-methyl-5-(phosphooxymethyl)pyrimidine + CO + 5'-deoxyadenosine + formate + L-methionine + 3 H(+). Its pathway is cofactor biosynthesis; thiamine diphosphate biosynthesis. Catalyzes the synthesis of the hydroxymethylpyrimidine phosphate (HMP-P) moiety of thiamine from aminoimidazole ribotide (AIR) in a radical S-adenosyl-L-methionine (SAM)-dependent reaction. This is Phosphomethylpyrimidine synthase from Idiomarina loihiensis (strain ATCC BAA-735 / DSM 15497 / L2-TR).